The following is a 366-amino-acid chain: D-alanine--D-alanine ligase A (366 aa).

The ATP-grasp domain maps to 145-348 (KRLLRDAGLK…YRELITALIE (204 aa)). An ATP-binding site is contributed by 175–230 (VEQLGLPLFVKPANQGSSVGVSKVKREADLRAALDEAFRYDHKVLVEQAVIGREIE). The Mg(2+) site is built by Asp302, Glu315, and Asn317.

This sequence belongs to the D-alanine--D-alanine ligase family. Requires Mg(2+) as cofactor. Mn(2+) serves as cofactor.

Its subcellular location is the cytoplasm. The catalysed reaction is 2 D-alanine + ATP = D-alanyl-D-alanine + ADP + phosphate + H(+). Its pathway is cell wall biogenesis; peptidoglycan biosynthesis. In terms of biological role, cell wall formation. The polypeptide is D-alanine--D-alanine ligase A (Chromobacterium violaceum (strain ATCC 12472 / DSM 30191 / JCM 1249 / CCUG 213 / NBRC 12614 / NCIMB 9131 / NCTC 9757 / MK)).